A 156-amino-acid polypeptide reads, in one-letter code: Cyclic pyranopterin monophosphate synthase (156 aa).

Substrate contacts are provided by residues leucine 75–histidine 77 and methionine 111–glutamate 112. The active site involves aspartate 126.

This sequence belongs to the MoaC family. Homohexamer; trimer of dimers.

The catalysed reaction is (8S)-3',8-cyclo-7,8-dihydroguanosine 5'-triphosphate = cyclic pyranopterin phosphate + diphosphate. Its pathway is cofactor biosynthesis; molybdopterin biosynthesis. Catalyzes the conversion of (8S)-3',8-cyclo-7,8-dihydroguanosine 5'-triphosphate to cyclic pyranopterin monophosphate (cPMP). This is Cyclic pyranopterin monophosphate synthase from Erythrobacter litoralis (strain HTCC2594).